Consider the following 377-residue polypeptide: Chaperone protein DnaJ (377 aa).

A J domain is found at 5 to 70 (DYYEILGVAK…QKRAAYDQFG (66 aa)). A CR-type zinc finger spans residues 130-208 (GTEVKIRVPS…CHGQGRVEEH (79 aa)). Zn(2+)-binding residues include cysteine 143, cysteine 146, cysteine 160, cysteine 163, cysteine 182, cysteine 185, cysteine 196, and cysteine 199. CXXCXGXG motif repeat units follow at residues 143–150 (CGECHGSG), 160–167 (CGTCGGVG), 182–189 (CPRCHGTG), and 196–203 (CKACHGQG).

Belongs to the DnaJ family. As to quaternary structure, homodimer. Zn(2+) is required as a cofactor.

It is found in the cytoplasm. Functionally, participates actively in the response to hyperosmotic and heat shock by preventing the aggregation of stress-denatured proteins and by disaggregating proteins, also in an autonomous, DnaK-independent fashion. Unfolded proteins bind initially to DnaJ; upon interaction with the DnaJ-bound protein, DnaK hydrolyzes its bound ATP, resulting in the formation of a stable complex. GrpE releases ADP from DnaK; ATP binding to DnaK triggers the release of the substrate protein, thus completing the reaction cycle. Several rounds of ATP-dependent interactions between DnaJ, DnaK and GrpE are required for fully efficient folding. Also involved, together with DnaK and GrpE, in the DNA replication of plasmids through activation of initiation proteins. The protein is Chaperone protein DnaJ of Thioalkalivibrio sulfidiphilus (strain HL-EbGR7).